Consider the following 256-residue polypeptide: Protein RGF1 INDUCIBLE TRANSCRIPTION FACTOR 1 (256 aa).

Residues 21–59 (CPYHETAKKNERNVCCLDCCTSLCPHCVPSHRFHRLLQV) form a B box-type zinc finger.

In terms of tissue distribution, expressed predominantly in root meristematic zones.

Its subcellular location is the nucleus. Probable transcription factor that plays a central role in mediating RGF1 hormone peptide signaling leading to the production of reactive oxygen species (ROS) in roots to modulate meristem size and root growth, probably via oxidative post-translational modification of the transcription factor PLETHORA (e.g. PLT1 and PLT2). This chain is Protein RGF1 INDUCIBLE TRANSCRIPTION FACTOR 1, found in Arabidopsis thaliana (Mouse-ear cress).